A 293-amino-acid polypeptide reads, in one-letter code: Phosphatidylserine decarboxylase proenzyme (293 aa).

Active-site charge relay system; for autoendoproteolytic cleavage activity residues include Asp-88, His-144, and Ser-247. Ser-247 serves as the catalytic Schiff-base intermediate with substrate; via pyruvic acid; for decarboxylase activity. A Pyruvic acid (Ser); by autocatalysis modification is found at Ser-247.

Belongs to the phosphatidylserine decarboxylase family. PSD-B subfamily. Prokaryotic type I sub-subfamily. Heterodimer of a large membrane-associated beta subunit and a small pyruvoyl-containing alpha subunit. Pyruvate is required as a cofactor. Is synthesized initially as an inactive proenzyme. Formation of the active enzyme involves a self-maturation process in which the active site pyruvoyl group is generated from an internal serine residue via an autocatalytic post-translational modification. Two non-identical subunits are generated from the proenzyme in this reaction, and the pyruvate is formed at the N-terminus of the alpha chain, which is derived from the carboxyl end of the proenzyme. The autoendoproteolytic cleavage occurs by a canonical serine protease mechanism, in which the side chain hydroxyl group of the serine supplies its oxygen atom to form the C-terminus of the beta chain, while the remainder of the serine residue undergoes an oxidative deamination to produce ammonia and the pyruvoyl prosthetic group on the alpha chain. During this reaction, the Ser that is part of the protease active site of the proenzyme becomes the pyruvoyl prosthetic group, which constitutes an essential element of the active site of the mature decarboxylase.

Its subcellular location is the cell membrane. The enzyme catalyses a 1,2-diacyl-sn-glycero-3-phospho-L-serine + H(+) = a 1,2-diacyl-sn-glycero-3-phosphoethanolamine + CO2. The protein operates within phospholipid metabolism; phosphatidylethanolamine biosynthesis; phosphatidylethanolamine from CDP-diacylglycerol: step 2/2. Its function is as follows. Catalyzes the formation of phosphatidylethanolamine (PtdEtn) from phosphatidylserine (PtdSer). In Xylella fastidiosa (strain M12), this protein is Phosphatidylserine decarboxylase proenzyme.